The chain runs to 321 residues: Malate dehydrogenase (321 aa).

NAD(+)-binding positions include 10–15 (GGGQIG) and aspartate 34. Substrate is bound by residues arginine 83 and arginine 89. NAD(+) contacts are provided by residues asparagine 96 and 119–121 (ISN). 2 residues coordinate substrate: asparagine 121 and arginine 152. The active-site Proton acceptor is the histidine 176.

The protein belongs to the LDH/MDH superfamily. MDH type 3 family.

It catalyses the reaction (S)-malate + NAD(+) = oxaloacetate + NADH + H(+). Catalyzes the reversible oxidation of malate to oxaloacetate. This Trichlorobacter lovleyi (strain ATCC BAA-1151 / DSM 17278 / SZ) (Geobacter lovleyi) protein is Malate dehydrogenase.